The sequence spans 319 residues: Acetyl-coenzyme A carboxylase carboxyl transferase subunit alpha (319 aa).

One can recognise a CoA carboxyltransferase C-terminal domain in the interval 35–296 (DLDKEIKQLE…KQRLIEQLNE (262 aa)).

It belongs to the AccA family. Acetyl-CoA carboxylase is a heterohexamer composed of biotin carboxyl carrier protein (AccB), biotin carboxylase (AccC) and two subunits each of ACCase subunit alpha (AccA) and ACCase subunit beta (AccD).

The protein localises to the cytoplasm. The catalysed reaction is N(6)-carboxybiotinyl-L-lysyl-[protein] + acetyl-CoA = N(6)-biotinyl-L-lysyl-[protein] + malonyl-CoA. The protein operates within lipid metabolism; malonyl-CoA biosynthesis; malonyl-CoA from acetyl-CoA: step 1/1. Functionally, component of the acetyl coenzyme A carboxylase (ACC) complex. First, biotin carboxylase catalyzes the carboxylation of biotin on its carrier protein (BCCP) and then the CO(2) group is transferred by the carboxyltransferase to acetyl-CoA to form malonyl-CoA. The chain is Acetyl-coenzyme A carboxylase carboxyl transferase subunit alpha from Aliivibrio salmonicida (strain LFI1238) (Vibrio salmonicida (strain LFI1238)).